Reading from the N-terminus, the 348-residue chain is MADIYRFPKFSYEDNGTVEPLPLRTGPDKKAIPHIRIVKVGDPPKHGVRYLDLLLLGFFETPKQTTNLGSVSDLTEPTSYSICGSGSLPIGVAKYYGTDQELLKACTDLRITVRRTVRAGEMIVYMVDSIGAPLLPWSGRLRQGMIFNANKVALAPQCLPVDKDIRLRVVFVNGTSLGAITIAKIPKTLADLALPNSISVNLLVTLKTGISTEQKGVLPVLDDQGEKKLNFMVHLGLIRRKVGKIYSVEYCKSKIERMRLIFSLGLIGGISFHVQVNGTLSKTFMSQLAWKRAVCFPLMDVNPHMNMVIWAASVEITGVDAVFQPAIPRDFRYYPNVVAKNIGRIRKL.

A YLDL motif motif is present at residues Tyr50–Leu53. Ser70 carries the post-translational modification Phosphoserine; by host.

This sequence belongs to the morbillivirus/respirovirus/rubulavirus M protein family. Homomultimer. Binds to the cytoplasmic regions of F and HN proteins. Interacts with nucleocapsid. Interacts with human alpha-tubulin and beta-tubulin. Interacts with host ANP32B. Post-translationally, a large portion is phosphorylated in the cytoplasm, but not in virion. However, this phosphorylation is not essential for virus replication.

It is found in the virion. The protein resides in the host cytoplasm. Its subcellular location is the host cell membrane. Its function is as follows. Plays a crucial role in virion assembly and budding. Forms a shell at the inner face of the plasma membrane and concentrates the HN and F glycoproteins. Acts as a negative regulator for transcription and replication by sticking to the nucleocapsid. This effect might be regulated by the cytoplasmic interaction with tubulin that dissociates the M protein from the nucleocapsid. This is Matrix protein (M) from Cavia cutleri (Guinea pig).